Consider the following 350-residue polypeptide: Small ribosomal subunit biogenesis GTPase RsgA (350 aa).

Over residues 1-17 (MSKNKLSKGQQRRVNAN) the composition is skewed to polar residues. The segment at 1–33 (MSKNKLSKGQQRRVNANHQRRLKTSKEKPDYDD) is disordered. The region spanning 104-273 (TSVLTRPDFY…VIDSPGVREF (170 aa)) is the CP-type G domain. Residues 160–163 (NKID) and 214–222 (GQSGVGKSS) each bind GTP. The Zn(2+) site is built by Cys-297, Cys-302, His-304, and Cys-310.

It belongs to the TRAFAC class YlqF/YawG GTPase family. RsgA subfamily. In terms of assembly, monomer. Associates with 30S ribosomal subunit, binds 16S rRNA. Requires Zn(2+) as cofactor.

It is found in the cytoplasm. One of several proteins that assist in the late maturation steps of the functional core of the 30S ribosomal subunit. Helps release RbfA from mature subunits. May play a role in the assembly of ribosomal proteins into the subunit. Circularly permuted GTPase that catalyzes slow GTP hydrolysis, GTPase activity is stimulated by the 30S ribosomal subunit. This is Small ribosomal subunit biogenesis GTPase RsgA from Escherichia coli O6:H1 (strain CFT073 / ATCC 700928 / UPEC).